The primary structure comprises 468 residues: UDP-N-acetylmuramate--L-alanine ligase (468 aa).

An ATP-binding site is contributed by 121 to 127 (GSHGKTT).

It belongs to the MurCDEF family.

The protein localises to the cytoplasm. The catalysed reaction is UDP-N-acetyl-alpha-D-muramate + L-alanine + ATP = UDP-N-acetyl-alpha-D-muramoyl-L-alanine + ADP + phosphate + H(+). Its pathway is cell wall biogenesis; peptidoglycan biosynthesis. In terms of biological role, cell wall formation. The chain is UDP-N-acetylmuramate--L-alanine ligase from Borreliella afzelii (strain PKo) (Borrelia afzelii).